Here is a 415-residue protein sequence, read N- to C-terminus: MAPVSGSRSPDREASGSGGRRRSSSKSPKPSKSARSPRGRRSRSHSCSRSGDRNGLTHQLGGLSQGSRNQSYRSRSRSRSRERPSAPRGIPFASASSSVYYGSYSRPYGSDKPWPSLLDKEREESLRQKRLSERERIGELGAPEVWGLSPKNPEPDSDEHTPVEDEEPKKSTTSASTSEEEKKKKSSRSKERSKKRRKKKSSKRKHKKYSEDSDSDSDSETDSSDEDNKRRAKKAKKKEKKKKHRSKKYKKKRSKKSRKESSDSSSKESQEEFLENPWKDRTKAEEPSDLIGPEAPKTLTSQDDKPLNYGHALLPGEGAAMAEYVKAGKRIPRRGEIGLTSEEIASFECSGYVMSGSRHRRMEAVRLRKENQIYSADEKRALASFNQEERRKRENKILASFREMVYRKTKGKDDK.

The tract at residues 1–311 is disordered; that stretch reads MAPVSGSRSP…QDDKPLNYGH (311 aa). A phosphoserine mark is found at Ser7 and Ser9. Over residues 25-34 the composition is skewed to low complexity; sequence SKSPKPSKSA. The span at 35–46 shows a compositional bias: basic residues; the sequence is RSPRGRRSRSHS. A phosphoserine mark is found at Ser50 and Ser64. The segment covering 93 to 110 has biased composition (low complexity); it reads ASASSSVYYGSYSRPYGS. Residue Lys112 is modified to N6-acetyllysine. A compositionally biased stretch (basic and acidic residues) spans 118-138; it reads LDKEREESLRQKRLSERERIG. Phosphoserine is present on residues Ser149 and Ser157. Basic and acidic residues predominate over residues 158-170; it reads DEHTPVEDEEPKK. A Phosphothreonine modification is found at Thr161. The segment at 179 to 272 is necessary for interaction with CIR1; the sequence is EEEKKKKSSR…DSSSKESQEE (94 aa). The segment covering 184 to 208 has biased composition (basic residues); the sequence is KKSSRSKERSKKRRKKKSSKRKHKK. Over residues 212–225 the composition is skewed to acidic residues; that stretch reads DSDSDSDSETDSSD. A compositionally biased stretch (basic residues) spans 230–258; that stretch reads RRAKKAKKKEKKKKHRSKKYKKKRSKKSR. Basic and acidic residues-rich tracts occupy residues 259 to 270 and 277 to 286; these read KESSDSSSKESQ and PWKDRTKAEE. A necessary for interaction with HDAC3 and transcriptional repression region spans residues 273–415; the sequence is FLENPWKDRT…YRKTKGKDDK (143 aa). Residues Lys283 and Lys305 each participate in a glycyl lysine isopeptide (Lys-Gly) (interchain with G-Cter in SUMO2) cross-link.

Belongs to the NKAP family. Component of the Notch corepressor complex. Interacts with CIR1 and HDAC3.

Its subcellular location is the nucleus. Acts as a transcriptional repressor. Plays a role as a transcriptional corepressor of the Notch-mediated signaling required for T-cell development. Also involved in the TNF and IL-1 induced NF-kappa-B activation. Associates with chromatin at the Notch-regulated SKP2 promoter. This is NF-kappa-B-activating protein (NKAP) from Homo sapiens (Human).